A 513-amino-acid chain; its full sequence is Maturase K (513 aa).

The protein belongs to the intron maturase 2 family. MatK subfamily.

The protein resides in the plastid. It localises to the chloroplast. In terms of biological role, usually encoded in the trnK tRNA gene intron. Probably assists in splicing its own and other chloroplast group II introns. This Phragmites australis (Common reed) protein is Maturase K.